The primary structure comprises 344 residues: L-rhamnose-proton symporter (344 aa).

The next 10 membrane-spanning stretches (helical) occupy residues Ala-4–Ala-24, Trp-38–Leu-58, Phe-68–Ile-88, Met-101–Ile-121, Thr-137–Leu-157, Leu-175–Ala-195, Leu-214–Ile-234, Val-259–Gly-279, Ile-290–Leu-310, and Val-323–Ala-343.

The protein belongs to the L-rhamnose transporter (TC 2.A.7.6) family.

It localises to the cell inner membrane. The enzyme catalyses L-rhamnopyranose(in) + H(+)(in) = L-rhamnopyranose(out) + H(+)(out). Its function is as follows. Uptake of L-rhamnose across the cytoplasmic membrane with the concomitant transport of protons into the cell (symport system). This chain is L-rhamnose-proton symporter, found in Escherichia coli O9:H4 (strain HS).